Reading from the N-terminus, the 404-residue chain is Translation initiation factor eIF2B subunit gamma (404 aa).

This sequence belongs to the eIF-2B gamma/epsilon subunits family. As to quaternary structure, component of the translation initiation factor 2B (eIF2B) complex which is a heterodecamer of two sets of five different subunits: alpha, beta, gamma, delta and epsilon. Subunits alpha, beta and delta comprise a regulatory subcomplex and subunits epsilon and gamma comprise a catalytic subcomplex. Within the complex, the hexameric regulatory complex resides at the center, with the two heterodimeric catalytic subcomplexes bound on opposite sides.

The protein localises to the cytoplasm. The protein resides in the cytosol. Its function is as follows. Acts as a component of the translation initiation factor 2B (eIF2B) complex, which catalyzes the exchange of GDP for GTP on the eukaryotic initiation factor 2 (eIF2) complex gamma subunit. Its guanine nucleotide exchange factor activity is repressed when bound to eIF2 complex phosphorylated on the alpha subunit, thereby limiting the amount of methionyl-initiator methionine tRNA available to the ribosome and consequently global translation is repressed. The polypeptide is Translation initiation factor eIF2B subunit gamma (Caenorhabditis elegans).